A 138-amino-acid chain; its full sequence is NADH dehydrogenase [ubiquinone] iron-sulfur protein 2, mitochondrial (138 aa).

The protein belongs to the complex I 49 kDa subunit family. In terms of assembly, core subunit of respiratory chain NADH dehydrogenase (Complex I) which is composed of 45 different subunits. Component of the iron-sulfur (IP) fragment of the enzyme. Interacts with NDUFAF3. Interacts with NDUFAF7. Interacts with CERS2. Requires [4Fe-4S] cluster as cofactor. Post-translationally, dimethylation at Arg-118 by NDUFAF7 takes place after NDUFS2 assembles into the complex I, leading to stabilize the early intermediate complex.

Its subcellular location is the mitochondrion inner membrane. It carries out the reaction a ubiquinone + NADH + 5 H(+)(in) = a ubiquinol + NAD(+) + 4 H(+)(out). Functionally, core subunit of the mitochondrial membrane respiratory chain NADH dehydrogenase (Complex I) which catalyzes electron transfer from NADH through the respiratory chain, using ubiquinone as an electron acceptor. Essential for the catalytic activity and assembly of complex I. Redox-sensitive, critical component of the oxygen-sensing pathway in the pulmonary vasculature which plays a key role in acute pulmonary oxygen-sensing and hypoxic pulmonary vasoconstriction. Plays an important role in carotid body sensing of hypoxia. Essential for glia-like neural stem and progenitor cell proliferation, differentiation and subsequent oligodendrocyte or neuronal maturation. This Mesocricetus auratus (Golden hamster) protein is NADH dehydrogenase [ubiquinone] iron-sulfur protein 2, mitochondrial.